A 633-amino-acid chain; its full sequence is Extracellular metalloproteinase 3 (633 aa).

Residues 1–18 (MHGLLLAGLLALPMNVLA) form the signal peptide. Residues 19–246 (HPAEQHASNV…VHNVVDYVAS (228 aa)) constitute a propeptide that is removed on maturation. Residue N410 is glycosylated (N-linked (GlcNAc...) asparagine). H429 is a Zn(2+) binding site. The active site involves E430. Zn(2+) is bound at residue H433. N-linked (GlcNAc...) asparagine glycans are attached at residues N480 and N622.

The protein belongs to the peptidase M36 family. It depends on Zn(2+) as a cofactor.

It localises to the secreted. Its function is as follows. Secreted metalloproteinase probably acting as a virulence factor. This is Extracellular metalloproteinase 3 (MEP3) from Arthroderma benhamiae (Trichophyton mentagrophytes).